The primary structure comprises 332 residues: Cytoplasmic phosphatidylinositol transfer protein 1 (332 aa).

Residues Ser-119, Ser-122, Ser-270, and Ser-274 each carry the phosphoserine modification. A compositionally biased stretch (low complexity) spans 272 to 281; it reads PSSAPSTPLS. The interval 272 to 332 is disordered; it reads PSSAPSTPLS…SEKPCRPKSE (61 aa). Phosphothreonine is present on Thr-278.

The protein belongs to the PtdIns transfer protein family. PI transfer class IIB subfamily. In terms of tissue distribution, widely expressed in brain, with expression in the gray matters of pre- and postnatal brains. Weakly expressed in brain and is rather confined to the embryonic stage.

The protein localises to the cytoplasm. It is found in the nucleus. It catalyses the reaction a 1,2-diacyl-sn-glycero-3-phospho-(1D-myo-inositol)(in) = a 1,2-diacyl-sn-glycero-3-phospho-(1D-myo-inositol)(out). The enzyme catalyses a 1,2-diacyl-sn-glycero-3-phosphate(in) = a 1,2-diacyl-sn-glycero-3-phosphate(out). In terms of biological role, catalyzes the transfer of phosphatidylinositol (PI) and phosphatidic acid (PA) between membranes. Binds PA derived from the phospholipase D signaling pathway and among the cellular PA species, preferably binds to the C16:0/16:1 and C16:1/18:1 PA species. Its function is as follows. Specifically binds to phosphatidylinositol but not to other phospholipids and may play a role in the phosphoinositide-mediated signaling in the neural development. This is Cytoplasmic phosphatidylinositol transfer protein 1 (Pitpnc1) from Mus musculus (Mouse).